The primary structure comprises 1447 residues: Sister chromatid cohesion protein PDS5 homolog B (1447 aa).

An HEAT repeat occupies 383 to 419; sequence LLVNDHLLNFVRERTLDKRWRVRKEAMMGLAQIYKKY. N6-acetyllysine is present on lysine 1136. The segment covering 1137-1155 has biased composition (polar residues); it reads PLSSAGKQSQTKSSRMETV. Residues 1137-1447 form a disordered region; sequence PLSSAGKQSQ…RRRSSKRERR (311 aa). A phosphoserine mark is found at serine 1140, serine 1162, serine 1166, serine 1176, serine 1182, and serine 1191. Positions 1156 to 1167 are enriched in low complexity; sequence SNASSSSNPSSP. Positions 1172 to 1184 are enriched in basic and acidic residues; it reads GRLDSTEMDHSEN. Positions 1196–1214 are enriched in basic and acidic residues; the sequence is KKSDKREDSDLVRSELEKP. Serine 1221 carries the post-translational modification Phosphoserine. Over residues 1225-1243 the composition is skewed to basic and acidic residues; sequence PEEKLGMDDLSKLVQEQKP. Over residues 1245-1254 the composition is skewed to basic residues; that stretch reads GSQRGRKRGH. The segment at residues 1247-1259 is a DNA-binding region (a.T hook 1); that stretch reads QRGRKRGHAASES. Residues serine 1257 and serine 1259 each carry the phosphoserine modification. A compositionally biased stretch (basic and acidic residues) spans 1265-1274; the sequence is PEEKRHKEEL. A Phosphoserine modification is found at serine 1283. The a.T hook 2 DNA-binding region spans 1287-1299; it reads KGKRGRPPKPLGG. Basic residues-rich tracts occupy residues 1309–1318 and 1341–1352; these read TSKKGNKKKP and KSKQQRTSKRAQ. Phosphoserine is present on residues serine 1357 and serine 1365. The segment covering 1358-1371 has biased composition (polar residues); it reads PETSAVESTQSTPQ. Threonine 1366 is modified (phosphothreonine). The residue at position 1368 (serine 1368) is a Phosphoserine. Residues threonine 1369 and threonine 1380 each carry the phosphothreonine modification. The segment at residues 1371–1383 is a DNA-binding region (a.T hook 3); that stretch reads QKGRGRPSKTPSP. Over residues 1378 to 1387 the composition is skewed to low complexity; sequence SKTPSPSQPK. Serine 1382, serine 1416, and serine 1419 each carry phosphoserine. Positions 1422 to 1432 are enriched in acidic residues; that stretch reads TTQEGAEEEDI. Over residues 1437-1447 the composition is skewed to basic residues; the sequence is VRRRSSKRERR.

The protein belongs to the PDS5 family. As to quaternary structure, interacts with the cohesin complex. Interacts with RAD21; the interaction is direct. Interacts with WAPL (via FGF motifs) or CDCA5 (via the FGF motif); the interaction is direct, cohesin-dependent and competitive. Highly expressed in intact prostate with levels decreasing after castration. Expressed exclusively in prostate cells inhibited from proliferating by long-term androgen exposure.

The protein localises to the nucleus. Functionally, regulator of sister chromatid cohesion in mitosis which may stabilize cohesin complex association with chromatin. May couple sister chromatid cohesion during mitosis to DNA replication. Cohesion ensures that chromosome partitioning is accurate in both meiotic and mitotic cells and plays an important role in DNA repair. Plays a role in androgen-induced proliferative arrest in prostate cells. The chain is Sister chromatid cohesion protein PDS5 homolog B (Pds5b) from Rattus norvegicus (Rat).